The primary structure comprises 75 residues: Conotoxin ar11a (75 aa).

The signal sequence occupies residues 1–19 (MKLCATFLLVLVTLPLVTG). A propeptide spanning residues 20-36 (EKSSERSLSGAILRGVR) is cleaved from the precursor. Disulfide bonds link cysteine 39–cysteine 53, cysteine 46–cysteine 58, cysteine 52–cysteine 63, and cysteine 57–cysteine 70.

In terms of tissue distribution, expressed by the venom duct.

The protein localises to the secreted. Functionally, both natural (L-Leu form) and synthetic (D-Leu from) peptides equally cause sensitivity to touch and body tremor. Neither L-Leu form nor D-Leu form is active on nerve-muscle preparation. This is Conotoxin ar11a from Conus arenatus (Sand-dusted cone).